The chain runs to 154 residues: Cell cycle regulator of non-homologous end joining (154 aa).

The residue at position 1 (Met-1) is an N-acetylmethionine. The short motif at 1–21 (METLKSENKKRVLPSWMTAPV) is the KBM element. Positions 77 to 144 (EEPTLVAPDK…RSPEEEEEDA (68 aa)) are disordered. Residues 95-105 (ASPHTSSPGSS) show a composition bias toward low complexity. The XLM motif lies at 144 to 154 (ALKYVREIFFS).

As to quaternary structure, interacts (via KBM motif) with XRCC5/Ku80 and XRCC6/Ku70 heterodimer. Interacts (via XLF motif) with TRIM28/KAP1, ATM, MRE11, NBN and RAD50. Interacts with splicing factor SF3B1. Interacts with ERCC6L2; this interaction is DNA independent.

It localises to the cytoplasm. It is found in the nucleus. The protein localises to the chromosome. Cell-cycle-specific regulator of classical non-homologous end joining (NHEJ) of DNA double-strand break (DSB) repair, which can act both as an activator or inhibitor of NHEJ, depending on the cell cycle phase. Acts as a regulator of DNA repair pathway choice by specifically inhibiting classical NHEJ during the S and G2 phases, thereby promoting error-free repair by homologous recombination during cell cycle phases when sister chromatids are present. Preferentially protects single-stranded overhangs at break sites by inhibiting classical NHEJ, thereby creating a local environment that favors homologous recombination. Acts via interaction with XRCC5/Ku80 and XRCC6/Ku70. In contrast, acts as an activator of NHEJ during G1 phase of the cell cycle: promotes classical NHEJ in G1 phase cells via multivalent interactions that increase the affinity of DNA damage response proteins for DSB-associated chromatin. Also involved in immunoglobulin V(D)J recombination. May act as a regulator of proteasome. In case of infection by a retrovirus, may regulate the proteasome during the uncoating phase of retrovirus. The sequence is that of Cell cycle regulator of non-homologous end joining from Cricetulus griseus (Chinese hamster).